A 256-amino-acid chain; its full sequence is Nuclear shuttle protein (256 aa).

The short motif at 18–39 (NTTNRFPIRRKYVGGHTRPSVR) is the Bipartite nuclear localization signal element. The Nuclear localization signal motif lies at 81–96 (SRGPSGDGRSRDYIKL). The interval 150–187 (ELFGAYSACYVNLRLLNNQQHRYRVLHSVKRFVSSAGD) is interaction with Arabidopsis thaliana NSI protein.

The protein belongs to the begomovirus nuclear shuttle protein family. As to quaternary structure, binds to single-stranded and double-stranded viral DNA. Interacts with the host nuclear shuttle interacting (NSI) protein. This interaction may allow NSP to recruit NSI monomers to the viral genome and thus regulate nuclear export of viral genome by NSP.

It localises to the host nucleus. The protein localises to the host cytoplasm. It is found in the host cell membrane. In terms of biological role, binds to the genomic viral ssDNA, shuttles it into and out of the cell nucleus. Begomoviruses use 2 proteins to transport their DNA from cell to cell. The nuclear shuttle protein (NSP) shuttles it between nucleus and cytoplasm and the movement protein (MP) probably transports the DNA-NSP complex to the cell periphery and facilitates movement across the cell wall. The polypeptide is Nuclear shuttle protein (Hewittia sublobata (Coralbush)).